The primary structure comprises 244 residues: Small ribosomal subunit protein uS2 (244 aa).

This sequence belongs to the universal ribosomal protein uS2 family.

The protein is Small ribosomal subunit protein uS2 of Halalkalibacterium halodurans (strain ATCC BAA-125 / DSM 18197 / FERM 7344 / JCM 9153 / C-125) (Bacillus halodurans).